Consider the following 806-residue polypeptide: Glycerol-3-phosphate acyltransferase (806 aa).

The short motif at 305–310 (CHRSHM) is the HXXXXD motif element.

It belongs to the GPAT/DAPAT family.

The protein resides in the cell inner membrane. The catalysed reaction is sn-glycerol 3-phosphate + an acyl-CoA = a 1-acyl-sn-glycero-3-phosphate + CoA. It participates in phospholipid metabolism; CDP-diacylglycerol biosynthesis; CDP-diacylglycerol from sn-glycerol 3-phosphate: step 1/3. This Salmonella paratyphi A (strain ATCC 9150 / SARB42) protein is Glycerol-3-phosphate acyltransferase.